A 142-amino-acid polypeptide reads, in one-letter code: Large ribosomal subunit protein uL11 (142 aa).

It belongs to the universal ribosomal protein uL11 family. Part of the ribosomal stalk of the 50S ribosomal subunit. Interacts with L10 and the large rRNA to form the base of the stalk. L10 forms an elongated spine to which L12 dimers bind in a sequential fashion forming a multimeric L10(L12)X complex. In terms of processing, one or more lysine residues are methylated.

In terms of biological role, forms part of the ribosomal stalk which helps the ribosome interact with GTP-bound translation factors. The polypeptide is Large ribosomal subunit protein uL11 (Sinorhizobium fredii (strain NBRC 101917 / NGR234)).